A 248-amino-acid chain; its full sequence is Metallo-beta-lactamase type 2 (248 aa).

An N-terminal signal peptide occupies residues 1–21 (MKRLKGLLVLALGFTGLQVFG). His97, His99, Asp101, His160, and Cys179 together coordinate Zn(2+). Residue Lys182 participates in substrate binding. Zn(2+) is bound at residue His221.

It belongs to the metallo-beta-lactamase superfamily. Class-B beta-lactamase family. Monomer. Requires Zn(2+) as cofactor.

Its subcellular location is the periplasm. It catalyses the reaction a beta-lactam + H2O = a substituted beta-amino acid. In terms of biological role, confers resistance to the different beta-lactams antibiotics (penicillin, cephalosporin and carbapenem) via the hydrolysis of the beta-lactam ring. The polypeptide is Metallo-beta-lactamase type 2 (blaB6) (Elizabethkingia meningoseptica (Chryseobacterium meningosepticum)).